The sequence spans 637 residues: Chaperone protein HtpG (637 aa).

Positions 1–335 are a; substrate-binding; the sequence is MQGTVNSERL…SSDLPLNISR (335 aa). Residues 336–559 form a b region; that stretch reads ETLQNNKIIE…DGSMDIRMER (224 aa). Positions 560–637 are c; sequence FLREQKQLNY…RMNSVLSQIN (78 aa).

Belongs to the heat shock protein 90 family. In terms of assembly, homodimer.

The protein localises to the cytoplasm. Functionally, molecular chaperone. Has ATPase activity. This Ehrlichia ruminantium (strain Gardel) protein is Chaperone protein HtpG.